A 275-amino-acid chain; its full sequence is Dermonecrotic toxin SpeSicTox-betaIIA3i (275 aa).

H5 is a catalytic residue. 2 residues coordinate Mg(2+): E25 and D27. The active-site Nucleophile is the H41. Intrachain disulfides connect C45–C51 and C47–C190. D85 contributes to the Mg(2+) binding site.

The protein belongs to the arthropod phospholipase D family. Class II subfamily. Mg(2+) is required as a cofactor. Expressed by the venom gland.

The protein localises to the secreted. The enzyme catalyses an N-(acyl)-sphingosylphosphocholine = an N-(acyl)-sphingosyl-1,3-cyclic phosphate + choline. It carries out the reaction an N-(acyl)-sphingosylphosphoethanolamine = an N-(acyl)-sphingosyl-1,3-cyclic phosphate + ethanolamine. It catalyses the reaction a 1-acyl-sn-glycero-3-phosphocholine = a 1-acyl-sn-glycero-2,3-cyclic phosphate + choline. The catalysed reaction is a 1-acyl-sn-glycero-3-phosphoethanolamine = a 1-acyl-sn-glycero-2,3-cyclic phosphate + ethanolamine. In terms of biological role, dermonecrotic toxins cleave the phosphodiester linkage between the phosphate and headgroup of certain phospholipids (sphingolipid and lysolipid substrates), forming an alcohol (often choline) and a cyclic phosphate. This toxin acts on sphingomyelin (SM). It may also act on ceramide phosphoethanolamine (CPE), lysophosphatidylcholine (LPC) and lysophosphatidylethanolamine (LPE), but not on lysophosphatidylserine (LPS), and lysophosphatidylglycerol (LPG). It acts by transphosphatidylation, releasing exclusively cyclic phosphate products as second products. Induces dermonecrosis, hemolysis, increased vascular permeability, edema, inflammatory response, and platelet aggregation. The polypeptide is Dermonecrotic toxin SpeSicTox-betaIIA3i (Sicarius peruensis (Six-eyed sand spider)).